Reading from the N-terminus, the 254-residue chain is Fasciclin-like arabinogalactan protein 7 (254 aa).

An N-terminal signal peptide occupies residues 1–22 (MAKMQLSIFIAVVALIVCSASA). Residues 44–186 (NVNLTELLSV…VAVYQVNRVL (143 aa)) form the FAS1 domain. N-linked (GlcNAc...) asparagine glycans are attached at residues Asn46, Asn78, Asn104, and Asn130. The interval 203 to 233 (APAPIVSAPSDSPSVADSEGASSPKSSHKNS) is disordered. Residues 206–220 (PIVSAPSDSPSVADS) show a composition bias toward low complexity. The span at 222-233 (GASSPKSSHKNS) shows a compositional bias: polar residues. A lipid anchor (GPI-anchor amidated asparagine) is attached at Asn232. Residues 233 to 254 (SGQKLLLAPISMVISGLVALFL) constitute a propeptide, removed in mature form.

It belongs to the fasciclin-like AGP family.

Its subcellular location is the cell membrane. Functionally, may be a cell surface adhesion protein. The sequence is that of Fasciclin-like arabinogalactan protein 7 (FLA7) from Arabidopsis thaliana (Mouse-ear cress).